The chain runs to 248 residues: 4-hydroxy-tetrahydrodipicolinate reductase (248 aa).

13-18 (GITGRL) lines the NAD(+) pocket. Position 36 (Arg36) interacts with NADP(+). NAD(+) contacts are provided by residues 84–86 (GTT) and 108–111 (AANF). The active-site Proton donor/acceptor is the His140. Residue His141 coordinates (S)-2,3,4,5-tetrahydrodipicolinate. The Proton donor role is filled by Lys144. 150–151 (GT) lines the (S)-2,3,4,5-tetrahydrodipicolinate pocket.

This sequence belongs to the DapB family.

It localises to the cytoplasm. The catalysed reaction is (S)-2,3,4,5-tetrahydrodipicolinate + NAD(+) + H2O = (2S,4S)-4-hydroxy-2,3,4,5-tetrahydrodipicolinate + NADH + H(+). The enzyme catalyses (S)-2,3,4,5-tetrahydrodipicolinate + NADP(+) + H2O = (2S,4S)-4-hydroxy-2,3,4,5-tetrahydrodipicolinate + NADPH + H(+). Its pathway is amino-acid biosynthesis; L-lysine biosynthesis via DAP pathway; (S)-tetrahydrodipicolinate from L-aspartate: step 4/4. Its function is as follows. Catalyzes the conversion of 4-hydroxy-tetrahydrodipicolinate (HTPA) to tetrahydrodipicolinate. The protein is 4-hydroxy-tetrahydrodipicolinate reductase of Gluconobacter oxydans (strain 621H) (Gluconobacter suboxydans).